The chain runs to 96 residues: MARLTILIAFVAALVLVVHTSAFRDEQSCKKQLQHSEKHQEDCFPRIKNVIGRSGSSGKKSEKLGQCCEILSDLSEGCQCRALQPVMEKYCYSEAK.

The signal sequence occupies residues 1–22; it reads MARLTILIAFVAALVLVVHTSA. 2 disulfide bridges follow: cysteine 29–cysteine 78 and cysteine 80–cysteine 91.

The protein belongs to the 2S seed storage albumins family.

The protein localises to the endoplasmic reticulum. The chain is Conglutin delta 4 from Lupinus angustifolius (Narrow-leaved blue lupine).